A 102-amino-acid chain; its full sequence is Small ribosomal subunit protein uS10 (102 aa).

It belongs to the universal ribosomal protein uS10 family. In terms of assembly, part of the 30S ribosomal subunit.

Functionally, involved in the binding of tRNA to the ribosomes. This is Small ribosomal subunit protein uS10 from Clostridium beijerinckii (strain ATCC 51743 / NCIMB 8052) (Clostridium acetobutylicum).